The following is a 326-amino-acid chain: Transmembrane protein 171 (326 aa).

The next 4 helical transmembrane spans lie at 22–42 (IFFL…LSIF), 57–77 (MMLK…VILA), 114–134 (LIFG…GIWV), and 161–181 (FLSL…FFVV). Residues 229-326 (FPESSASAAA…LSPSSEPSPP (98 aa)) form a disordered region. Residues 230-240 (PESSASAAARS) are compositionally biased toward low complexity. Residues 257–266 (SIFQSGSPTP) show a composition bias toward polar residues. Composition is skewed to low complexity over residues 288 to 302 (SSSE…LSEL) and 312 to 326 (ATTT…PSPP).

The protein resides in the membrane. This is Transmembrane protein 171 (TMEM171) from Bos taurus (Bovine).